Consider the following 338-residue polypeptide: DNA-directed RNA polymerase subunit alpha (338 aa).

The segment at 1–225 is alpha N-terminal domain (alpha-NTD); that stretch reads MLISQRPTLT…ELFGLARELN (225 aa). Residues 242 to 338 are alpha C-terminal domain (alpha-CTD); it reads YIAAYSMPIE…YIDVEPEDAE (97 aa). The disordered stretch occupies residues 314-338; that stretch reads FDPSTLEGYDAETGGYIDVEPEDAE.

It belongs to the RNA polymerase alpha chain family. Homodimer. The RNAP catalytic core consists of 2 alpha, 1 beta, 1 beta' and 1 omega subunit. When a sigma factor is associated with the core the holoenzyme is formed, which can initiate transcription.

The enzyme catalyses RNA(n) + a ribonucleoside 5'-triphosphate = RNA(n+1) + diphosphate. In terms of biological role, DNA-dependent RNA polymerase catalyzes the transcription of DNA into RNA using the four ribonucleoside triphosphates as substrates. In Corynebacterium efficiens (strain DSM 44549 / YS-314 / AJ 12310 / JCM 11189 / NBRC 100395), this protein is DNA-directed RNA polymerase subunit alpha.